The following is a 295-amino-acid chain: Small ribosomal subunit protein uS2 (295 aa).

This sequence belongs to the universal ribosomal protein uS2 family. In terms of assembly, component of the small ribosomal subunit. Mature ribosomes consist of a small (40S) and a large (60S) subunit. The 40S subunit contains about 33 different proteins and 1 molecule of RNA (18S). The 60S subunit contains about 49 different proteins and 3 molecules of RNA (25S, 5.8S and 5S). Interacts with RPS21.

Its subcellular location is the cytoplasm. Functionally, required for the assembly and/or stability of the 40S ribosomal subunit. Required for the processing of the 20S rRNA-precursor to mature 18S rRNA in a late step of the maturation of 40S ribosomal subunits. The polypeptide is Small ribosomal subunit protein uS2 (Paracoccidioides brasiliensis (strain Pb03)).